The following is a 119-amino-acid chain: Fluoride-specific ion channel FluC 2 (119 aa).

Residues 46 to 66 (FALGLLTFAGVTGDAALLVGV) form a helical membrane-spanning segment. G70 and T73 together coordinate Na(+). A helical membrane pass occupies residues 96–116 (LNAVGNLACALVGIGLAWGIV).

This sequence belongs to the fluoride channel Fluc/FEX (TC 1.A.43) family.

The protein localises to the cell membrane. The catalysed reaction is fluoride(in) = fluoride(out). Its activity is regulated as follows. Na(+) is not transported, but it plays an essential structural role and its presence is essential for fluoride channel function. Fluoride-specific ion channel. Important for reducing fluoride concentration in the cell, thus reducing its toxicity. The chain is Fluoride-specific ion channel FluC 2 from Haloarcula marismortui (strain ATCC 43049 / DSM 3752 / JCM 8966 / VKM B-1809) (Halobacterium marismortui).